The chain runs to 104 residues: L-rhamnose mutarotase (104 aa).

Residue Tyr-18 participates in substrate binding. The Proton donor role is filled by His-22. Substrate is bound by residues Tyr-41 and 76-77 (WW).

Belongs to the rhamnose mutarotase family. In terms of assembly, homodimer.

Its subcellular location is the cytoplasm. It carries out the reaction alpha-L-rhamnose = beta-L-rhamnose. Its pathway is carbohydrate metabolism; L-rhamnose metabolism. Functionally, involved in the anomeric conversion of L-rhamnose. The polypeptide is L-rhamnose mutarotase (Salmonella arizonae (strain ATCC BAA-731 / CDC346-86 / RSK2980)).